We begin with the raw amino-acid sequence, 225 residues long: Phosphoribosylformylglycinamidine synthase subunit PurQ (225 aa).

Positions Ser5 to Ala225 constitute a Glutamine amidotransferase type-1 domain. The Nucleophile role is filled by Cys89. Active-site residues include His197 and Glu199.

Part of the FGAM synthase complex composed of 1 PurL, 1 PurQ and 2 PurS subunits.

It localises to the cytoplasm. It catalyses the reaction N(2)-formyl-N(1)-(5-phospho-beta-D-ribosyl)glycinamide + L-glutamine + ATP + H2O = 2-formamido-N(1)-(5-O-phospho-beta-D-ribosyl)acetamidine + L-glutamate + ADP + phosphate + H(+). The catalysed reaction is L-glutamine + H2O = L-glutamate + NH4(+). It functions in the pathway purine metabolism; IMP biosynthesis via de novo pathway; 5-amino-1-(5-phospho-D-ribosyl)imidazole from N(2)-formyl-N(1)-(5-phospho-D-ribosyl)glycinamide: step 1/2. In terms of biological role, part of the phosphoribosylformylglycinamidine synthase complex involved in the purines biosynthetic pathway. Catalyzes the ATP-dependent conversion of formylglycinamide ribonucleotide (FGAR) and glutamine to yield formylglycinamidine ribonucleotide (FGAM) and glutamate. The FGAM synthase complex is composed of three subunits. PurQ produces an ammonia molecule by converting glutamine to glutamate. PurL transfers the ammonia molecule to FGAR to form FGAM in an ATP-dependent manner. PurS interacts with PurQ and PurL and is thought to assist in the transfer of the ammonia molecule from PurQ to PurL. In Novosphingobium aromaticivorans (strain ATCC 700278 / DSM 12444 / CCUG 56034 / CIP 105152 / NBRC 16084 / F199), this protein is Phosphoribosylformylglycinamidine synthase subunit PurQ.